The following is a 284-amino-acid chain: D-tagatose-1,6-bisphosphate aldolase subunit GatY (284 aa).

Asp-82 acts as the Proton donor in catalysis. Zn(2+) contacts are provided by His-83 and His-180. Position 181 (Gly-181) interacts with dihydroxyacetone phosphate. His-208 serves as a coordination point for Zn(2+). Dihydroxyacetone phosphate-binding positions include 209–211 (GAS) and 230–233 (NVAT).

It belongs to the class II fructose-bisphosphate aldolase family. TagBP aldolase GatY subfamily. In terms of assembly, forms a complex with GatZ. Zn(2+) is required as a cofactor.

It carries out the reaction D-tagatofuranose 1,6-bisphosphate = D-glyceraldehyde 3-phosphate + dihydroxyacetone phosphate. The protein operates within carbohydrate metabolism; D-tagatose 6-phosphate degradation; D-glyceraldehyde 3-phosphate and glycerone phosphate from D-tagatose 6-phosphate: step 2/2. Functionally, catalytic subunit of the tagatose-1,6-bisphosphate aldolase GatYZ, which catalyzes the reversible aldol condensation of dihydroxyacetone phosphate (DHAP or glycerone-phosphate) with glyceraldehyde 3-phosphate (G3P) to produce tagatose 1,6-bisphosphate (TBP). Requires GatZ subunit for full activity and stability. Is involved in the catabolism of galactitol. The sequence is that of D-tagatose-1,6-bisphosphate aldolase subunit GatY from Escherichia coli O6:H1 (strain CFT073 / ATCC 700928 / UPEC).